Here is a 371-residue protein sequence, read N- to C-terminus: Histidinol-phosphate aminotransferase (371 aa).

Lys228 is modified (N6-(pyridoxal phosphate)lysine).

It belongs to the class-II pyridoxal-phosphate-dependent aminotransferase family. Histidinol-phosphate aminotransferase subfamily. Pyridoxal 5'-phosphate serves as cofactor.

The enzyme catalyses L-histidinol phosphate + 2-oxoglutarate = 3-(imidazol-4-yl)-2-oxopropyl phosphate + L-glutamate. It participates in amino-acid biosynthesis; L-histidine biosynthesis; L-histidine from 5-phospho-alpha-D-ribose 1-diphosphate: step 7/9. The polypeptide is Histidinol-phosphate aminotransferase (Methanococcus aeolicus (strain ATCC BAA-1280 / DSM 17508 / OCM 812 / Nankai-3)).